Here is a 275-residue protein sequence, read N- to C-terminus: 4-hydroxy-tetrahydrodipicolinate reductase (275 aa).

Residues glycine 13 to methionine 18 and glycine 108 to threonine 110 each bind NAD(+). Residue histidine 164 is the Proton donor/acceptor of the active site. Residue histidine 165 coordinates (S)-2,3,4,5-tetrahydrodipicolinate. The active-site Proton donor is lysine 168. Glycine 174–threonine 175 provides a ligand contact to (S)-2,3,4,5-tetrahydrodipicolinate.

Belongs to the DapB family.

It localises to the cytoplasm. The enzyme catalyses (S)-2,3,4,5-tetrahydrodipicolinate + NAD(+) + H2O = (2S,4S)-4-hydroxy-2,3,4,5-tetrahydrodipicolinate + NADH + H(+). It carries out the reaction (S)-2,3,4,5-tetrahydrodipicolinate + NADP(+) + H2O = (2S,4S)-4-hydroxy-2,3,4,5-tetrahydrodipicolinate + NADPH + H(+). The protein operates within amino-acid biosynthesis; L-lysine biosynthesis via DAP pathway; (S)-tetrahydrodipicolinate from L-aspartate: step 4/4. Its function is as follows. Catalyzes the conversion of 4-hydroxy-tetrahydrodipicolinate (HTPA) to tetrahydrodipicolinate. This Picosynechococcus sp. (strain ATCC 27264 / PCC 7002 / PR-6) (Agmenellum quadruplicatum) protein is 4-hydroxy-tetrahydrodipicolinate reductase.